Here is a 202-residue protein sequence, read N- to C-terminus: Dephospho-CoA kinase (202 aa).

The region spanning 5 to 202 is the DPCK domain; sequence IVGLTGGIAS…DADYRARSDR (198 aa). 13-18 serves as a coordination point for ATP; the sequence is ASGKSA.

This sequence belongs to the CoaE family.

It is found in the cytoplasm. It carries out the reaction 3'-dephospho-CoA + ATP = ADP + CoA + H(+). It participates in cofactor biosynthesis; coenzyme A biosynthesis; CoA from (R)-pantothenate: step 5/5. Functionally, catalyzes the phosphorylation of the 3'-hydroxyl group of dephosphocoenzyme A to form coenzyme A. The protein is Dephospho-CoA kinase of Xanthomonas oryzae pv. oryzae (strain MAFF 311018).